The primary structure comprises 669 residues: DNA ligase 2 (669 aa).

Residues D35–D39 and S83–L84 each bind NAD(+). The active-site N6-AMP-lysine intermediate is K125. The NAD(+) site is built by R147, E181, and K317. Zn(2+) is bound by residues C410, C413, C426, and C432. Residues V590–M669 form the BRCT domain.

Belongs to the NAD-dependent DNA ligase family. LigA subfamily. Requires Mg(2+) as cofactor. It depends on Mn(2+) as a cofactor.

The enzyme catalyses NAD(+) + (deoxyribonucleotide)n-3'-hydroxyl + 5'-phospho-(deoxyribonucleotide)m = (deoxyribonucleotide)n+m + AMP + beta-nicotinamide D-nucleotide.. Functionally, DNA ligase that catalyzes the formation of phosphodiester linkages between 5'-phosphoryl and 3'-hydroxyl groups in double-stranded DNA using NAD as a coenzyme and as the energy source for the reaction. It is essential for DNA replication and repair of damaged DNA. The polypeptide is DNA ligase 2 (Clostridium acetobutylicum (strain ATCC 824 / DSM 792 / JCM 1419 / IAM 19013 / LMG 5710 / NBRC 13948 / NRRL B-527 / VKM B-1787 / 2291 / W)).